The chain runs to 360 residues: BLOC-1-related complex subunit 6 (360 aa).

Over residues 1–10 (MEAARGRLGP) the composition is skewed to basic and acidic residues. The disordered stretch occupies residues 1–201 (MEAARGRLGP…AGAGGGRRAT (201 aa)). Residues 23–35 (VTFSGRPSRTLSK) are compositionally biased toward polar residues. Position 41 is a phosphothreonine (threonine 41). Basic and acidic residues predominate over residues 71–83 (HRPELDTWEDKPS). A compositionally biased stretch (low complexity) spans 89–100 (SGARGSRGTSGS). Serine 130 is modified (phosphoserine). The span at 144–156 (EGDDDDDGDDEEA) shows a compositional bias: acidic residues. The residue at position 173 (serine 173) is a Phosphoserine. Over residues 179 to 198 (GACGGGGSSSSGEAGAGGGR) the composition is skewed to gly residues. The residue at position 201 (threonine 201) is a Phosphothreonine. Phosphoserine is present on serine 204.

It belongs to the BORCS6 family. As to quaternary structure, component of the BLOC-one-related complex (BORC) which is composed of BLOC1S1, BLOC1S2, BORCS5, BORCS6, BORCS7, BORCS8, KXD1 and SNAPIN.

The protein localises to the lysosome membrane. Its function is as follows. As part of the BORC complex may play a role in lysosomes movement and localization at the cell periphery. Associated with the cytosolic face of lysosomes, the BORC complex may recruit ARL8B and couple lysosomes to microtubule plus-end-directed kinesin motor. This chain is BLOC-1-related complex subunit 6, found in Rattus norvegicus (Rat).